Here is a 1214-residue protein sequence, read N- to C-terminus: Filamin-A-interacting protein 1 (1214 aa).

The segment covering 1 to 15 (MRSRNQGGESSSNGH) has biased composition (polar residues). The interval 1–73 (MRSRNQGGES…ESEKKTKKPL (73 aa)) is disordered. Composition is skewed to basic and acidic residues over residues 32-47 (PSED…KGED) and 61-73 (PSGE…KKPL). Position 138 is a phosphoserine (S138). Coiled coils occupy residues 192–581 (DYMN…KLRS) and 624–778 (PEDN…ELEL). 2 disordered regions span residues 875-898 (KREN…GHPG) and 949-976 (KPRI…GPER). Residue S979 is modified to Phosphoserine. The segment at 1104 to 1192 (VSTGTVLRSP…TKFQPRAETQ (89 aa)) is disordered. Residues 1126 to 1140 (VTSTITITPVTTSST) show a composition bias toward low complexity. Residues 1141–1157 (RGTQSVSGQDGSSQRPT) are compositionally biased toward polar residues. The span at 1169–1180 (AGKPVVAAPGAG) shows a compositional bias: low complexity.

It belongs to the FILIP1 family. Interacts with FLNA. Interacts with RHOD (in GTP-bound form).

It localises to the cytoplasm. The protein localises to the cytoskeleton. Functionally, by acting through a filamin-A/F-actin axis, it controls the start of neocortical cell migration from the ventricular zone. May be able to induce the degradation of filamin-A. The polypeptide is Filamin-A-interacting protein 1 (Filip1) (Mus musculus (Mouse)).